We begin with the raw amino-acid sequence, 419 residues long: Gamma-glutamyl phosphate reductase (419 aa).

This sequence belongs to the gamma-glutamyl phosphate reductase family.

It localises to the cytoplasm. The enzyme catalyses L-glutamate 5-semialdehyde + phosphate + NADP(+) = L-glutamyl 5-phosphate + NADPH + H(+). The protein operates within amino-acid biosynthesis; L-proline biosynthesis; L-glutamate 5-semialdehyde from L-glutamate: step 2/2. Its function is as follows. Catalyzes the NADPH-dependent reduction of L-glutamate 5-phosphate into L-glutamate 5-semialdehyde and phosphate. The product spontaneously undergoes cyclization to form 1-pyrroline-5-carboxylate. This Ruthia magnifica subsp. Calyptogena magnifica protein is Gamma-glutamyl phosphate reductase.